A 1166-amino-acid polypeptide reads, in one-letter code: DNA-directed RNA polymerase subunit beta (1166 aa).

This sequence belongs to the RNA polymerase beta chain family. The RNAP catalytic core consists of 2 alpha, 1 beta, 1 beta' and 1 omega subunit. When a sigma factor is associated with the core the holoenzyme is formed, which can initiate transcription.

It carries out the reaction RNA(n) + a ribonucleoside 5'-triphosphate = RNA(n+1) + diphosphate. DNA-dependent RNA polymerase catalyzes the transcription of DNA into RNA using the four ribonucleoside triphosphates as substrates. The chain is DNA-directed RNA polymerase subunit beta from Nocardioides sp. (strain ATCC BAA-499 / JS614).